Reading from the N-terminus, the 273-residue chain is Vitamin B12-binding protein (273 aa).

Positions Met-1–Ala-18 are cleaved as a signal peptide. The region spanning Arg-23 to Arg-273 is the Fe/B12 periplasmic-binding domain. Cysteines 183 and 263 form a disulfide.

It belongs to the BtuF family. As to quaternary structure, the complex is composed of two ATP-binding proteins (BtuD), two transmembrane proteins (BtuC) and a solute-binding protein (BtuF).

The protein localises to the periplasm. In terms of biological role, part of the ABC transporter complex BtuCDF involved in vitamin B12 import. Binds vitamin B12 and delivers it to the periplasmic surface of BtuC. The polypeptide is Vitamin B12-binding protein (Vibrio vulnificus (strain YJ016)).